The chain runs to 453 residues: Protein amnionless (453 aa).

Positions 1–19 (MGVLGRVLLWLQLCALTQA) are cleaved as a signal peptide. Topologically, residues 20–357 (VSKLWVPNTD…ESGAHVWGSS (338 aa)) are extracellular. N-linked (GlcNAc...) asparagine glycosylation occurs at Asn35. Intrachain disulfides connect Cys43–Cys96, Cys137–Cys213, Cys205–Cys211, Cys223–Cys249, Cys234–Cys250, and Cys239–Cys253. Residues 67–87 (SDMLLPLDGELVLASGAGFGV) form an interaction with CUBN region. A VWFC domain is found at 202–254 (PEDCADPSGCVCGNAEAQPWICAALLQPLGGRCPQAACHSALRPQGQCCDLCG). A helical transmembrane segment spans residues 358-378 (AAGLAGGVAAAVLLALLVLLV). Topologically, residues 379–453 (APPLLRRAGR…PLFAGAEAEA (75 aa)) are cytoplasmic.

In terms of assembly, interacts (via extracellular region) with CUBN/cubilin, giving rise to a huge complex containing one AMN chain and three CUBN chains. Post-translationally, N-glycosylated. In terms of processing, a soluble form arises by proteolytic removal of the membrane anchor. As to expression, detected in proximal tubules in the kidney cortex (at protein level). Long isoforms are highly expressed in small intestine, colon and kidney (renal proximal tubule epithelial cells). Shorter isoforms are detected at lower levels in testis, thymus and peripheral blood leukocytes.

The protein localises to the apical cell membrane. It localises to the cell membrane. Its subcellular location is the endosome membrane. The protein resides in the membrane. It is found in the coated pit. The protein localises to the secreted. Functionally, membrane-bound component of the endocytic receptor formed by AMN and CUBN. Required for normal CUBN glycosylation and trafficking to the cell surface. The complex formed by AMN and CUBN is required for efficient absorption of vitamin B12. Required for normal CUBN-mediated protein transport in the kidney. The sequence is that of Protein amnionless (AMN) from Homo sapiens (Human).